Consider the following 122-residue polypeptide: Acidic phospholipase A2 4 (122 aa).

7 disulfide bridges follow: C26–C115, C28–C44, C43–C95, C49–C122, C50–C88, C57–C81, and C75–C86. F27, G29, and G31 together coordinate Ca(2+). H47 is a catalytic residue. D48 is a binding site for Ca(2+). D89 is an active-site residue.

This sequence belongs to the phospholipase A2 family. Group II subfamily. D49 sub-subfamily. Ca(2+) is required as a cofactor. Expressed by the venom gland.

The protein resides in the secreted. The enzyme catalyses a 1,2-diacyl-sn-glycero-3-phosphocholine + H2O = a 1-acyl-sn-glycero-3-phosphocholine + a fatty acid + H(+). Its function is as follows. Snake venom phospholipase A2 (PLA2) that has high lipolytic activity. PLA2 catalyzes the calcium-dependent hydrolysis of the 2-acyl groups in 3-sn-phosphoglycerides. The polypeptide is Acidic phospholipase A2 4 (Craspedocephalus gramineus (Bamboo pit viper)).